Reading from the N-terminus, the 206-residue chain is Ribosomal RNA large subunit methyltransferase E (206 aa).

5 residues coordinate S-adenosyl-L-methionine: G60, W62, D80, D96, and D121. K161 serves as the catalytic Proton acceptor.

The protein belongs to the class I-like SAM-binding methyltransferase superfamily. RNA methyltransferase RlmE family.

The protein resides in the cytoplasm. It carries out the reaction uridine(2552) in 23S rRNA + S-adenosyl-L-methionine = 2'-O-methyluridine(2552) in 23S rRNA + S-adenosyl-L-homocysteine + H(+). Its function is as follows. Specifically methylates the uridine in position 2552 of 23S rRNA at the 2'-O position of the ribose in the fully assembled 50S ribosomal subunit. In Stutzerimonas stutzeri (strain A1501) (Pseudomonas stutzeri), this protein is Ribosomal RNA large subunit methyltransferase E.